Reading from the N-terminus, the 314-residue chain is 3'-5' exoribonuclease YhaM (314 aa).

Positions 22 to 90 (SSTKGIASNG…QLKLRNIRPV (69 aa)) form a DNA-binding region, OB. Residues 163-279 (HVVSMLNLAK…LHYIDNLDAK (117 aa)) enclose the HD domain.

The protein belongs to the YhaM family. Requires Mn(2+) as cofactor. The cofactor is Co(2+).

Its function is as follows. Shows a 3'-5' exoribonuclease activity as well as single-stranded DNA 3'-5'exonuclease activity. Plays a role in the secondary pathway of 23S rRNA 3' end maturation. This Bacillus subtilis (strain 168) protein is 3'-5' exoribonuclease YhaM.